Reading from the N-terminus, the 132-residue chain is Small ribosomal subunit protein uS8 (132 aa).

This sequence belongs to the universal ribosomal protein uS8 family. As to quaternary structure, part of the 30S ribosomal subunit. Contacts proteins S5 and S12.

Its function is as follows. One of the primary rRNA binding proteins, it binds directly to 16S rRNA central domain where it helps coordinate assembly of the platform of the 30S subunit. The protein is Small ribosomal subunit protein uS8 of Exiguobacterium sibiricum (strain DSM 17290 / CCUG 55495 / CIP 109462 / JCM 13490 / 255-15).